Reading from the N-terminus, the 426-residue chain is MKHLTEMVRQHKAGKTNGIYAVCSAHPLVLEAAIRYASANQTPLLIEATSNQVDQFGGYTGMTPADFRGFVCQLADSLNFPQDALILGGDHLGPNRWQNLPAAQAMANADDLIKSYVAAGFKKIHLDCSMSCQDDPIPLTDDIVAERAARLAKVAEETCLEHFGEADLEYVIGTEVPVPGGAHETLSELAVTTPDAARATLEAHRHAFEKQGLNAIWPRIIALVVQPGVEFDHTNVIDYQPAKASALSQMVENYETLIFEAHSTDYQTPQSLRQLVIDHFAILKVGPALTFALREALFSLAAIEEELVPAKACSGLRQVLEDVMLDRPEYWQSHYHGDGNARRLARGYSYSDRVRYYWPDSQIDDAFAHLVRNLADSPIPLPLISQYLPLQYVKVRSGELQPTPRELIINHIQDILAQYHTACEGQ.

The protein belongs to the GatZ/KbaZ family. KbaZ subfamily. As to quaternary structure, forms a complex with KbaY.

It participates in carbohydrate metabolism; D-tagatose 6-phosphate degradation; D-glyceraldehyde 3-phosphate and glycerone phosphate from D-tagatose 6-phosphate: step 2/2. Its function is as follows. Component of the tagatose-1,6-bisphosphate aldolase KbaYZ that is required for full activity and stability of the Y subunit. Could have a chaperone-like function for the proper and stable folding of KbaY. When expressed alone, KbaZ does not show any aldolase activity. In Escherichia coli (strain K12 / MC4100 / BW2952), this protein is D-tagatose-1,6-bisphosphate aldolase subunit KbaZ.